We begin with the raw amino-acid sequence, 225 residues long: Ribonuclease 3 (225 aa).

The RNase III domain maps to 5 to 127 (IDKLERKIGY…IIGAVYLDSD (123 aa)). Residue E40 participates in Mg(2+) binding. D44 is an active-site residue. Residues D113 and E116 each coordinate Mg(2+). The active site involves E116. The region spanning 154–224 (DPKTRLQEFL…AETALEQLSN (71 aa)) is the DRBM domain.

This sequence belongs to the ribonuclease III family. Homodimer. It depends on Mg(2+) as a cofactor.

Its subcellular location is the cytoplasm. The catalysed reaction is Endonucleolytic cleavage to 5'-phosphomonoester.. Functionally, digests double-stranded RNA. Involved in the processing of primary rRNA transcript to yield the immediate precursors to the large and small rRNAs (23S and 16S). Processes some mRNAs, and tRNAs when they are encoded in the rRNA operon. Processes pre-crRNA and tracrRNA of type II CRISPR loci if present in the organism. This is Ribonuclease 3 from Vibrio atlanticus (strain LGP32) (Vibrio splendidus (strain Mel32)).